The chain runs to 669 residues: Glycine--tRNA ligase beta subunit (669 aa).

The protein belongs to the class-II aminoacyl-tRNA synthetase family. As to quaternary structure, tetramer of two alpha and two beta subunits.

It is found in the cytoplasm. It carries out the reaction tRNA(Gly) + glycine + ATP = glycyl-tRNA(Gly) + AMP + diphosphate. The polypeptide is Glycine--tRNA ligase beta subunit (Phenylobacterium zucineum (strain HLK1)).